The primary structure comprises 141 residues: Putative pre-16S rRNA nuclease (141 aa).

It belongs to the YqgF nuclease family.

It localises to the cytoplasm. Functionally, could be a nuclease involved in processing of the 5'-end of pre-16S rRNA. This chain is Putative pre-16S rRNA nuclease, found in Syntrophomonas wolfei subsp. wolfei (strain DSM 2245B / Goettingen).